The primary structure comprises 176 residues: Nudix hydrolase 18, mitochondrial (176 aa).

The N-terminal 21 residues, 1-21 (MVCLVSRTGRQSQRYNKGRRQ), are a transit peptide targeting the mitochondrion. In terms of domain architecture, Nudix hydrolase spans 22 to 153 (VVGCIPYRLK…WMKEALDVLV (132 aa)). The Nudix box motif lies at 60 to 81 (GGWELDESVEEAASRESLEEAG). Mg(2+) is bound by residues glutamate 75 and glutamate 79.

Belongs to the Nudix hydrolase family. The cofactor is Mg(2+). Mn(2+) is required as a cofactor. In terms of tissue distribution, expressed in roots, stems and inflorescences.

It localises to the mitochondrion. In terms of biological role, probably mediates the hydrolysis of some nucleoside diphosphate derivatives. The protein is Nudix hydrolase 18, mitochondrial (NUDT18) of Arabidopsis thaliana (Mouse-ear cress).